The primary structure comprises 952 residues: Bromodomain testis-specific protein (952 aa).

The Bromo 1 domain maps to 26-132 (RLTNQLQFLQ…KLFMQKLSQM (107 aa)). The span at 141 to 150 (GKERMKKDIQ) shows a compositional bias: basic and acidic residues. The tract at residues 141–168 (GKERMKKDIQQKTAVSSAKEQTPSKSAE) is disordered. Polar residues predominate over residues 151–167 (QKTAVSSAKEQTPSKSA). S186 is modified (phosphoserine). The short motif at 208-219 (KGVKRRADTTTP) is the Nuclear localization signal element. Residues 209–257 (GVKRRADTTTPTTSSAKASSESPPPLREAKPANAPVKENTVKSVLPDSQ) form a disordered region. Low complexity predominate over residues 216–229 (TTTPTTSSAKASSE). The 110-residue stretch at 266–375 (VKVTEQLKHC…DVFEMHFAKI (110 aa)) folds into the Bromo 2 domain. Disordered regions lie at residues 392–420 (SAKALSRESSSEASSGDCSSEDSEDERVQ), 442–504 (VPLR…NAKP), 607–746 (QLNC…GCQV), and 850–930 (KHLE…RREA). Residues 417 to 442 (ERVQRLAKLQEQLNAVHQQLQVLSQV) are a coiled coil. The span at 445 to 463 (RKLKKKNEKSKRAPKRKKV) shows a compositional bias: basic residues. Residues 495–577 (KLEEEDNAKP…ACLRKRSLKP (83 aa)) enclose the NET domain. Positions 610-619 (CRKRQTKRPA) are enriched in basic residues. The span at 625–638 (PRPPLPPPPPPPPE) shows a compositional bias: pro residues. Residues 646-681 (SDSSSSSSSSGSGSSSSSSSSSGSGSSSSDSSSSDS) show a composition bias toward low complexity. A compositionally biased stretch (polar residues) spans 718–729 (SAETALVQQSTG). A coiled-coil region spans residues 837 to 936 (EKEVKARTQE…RREAMAGTID (100 aa)). Residues 850–867 (KHLEHSAKDPKVSQESQR) show a composition bias toward basic and acidic residues. Residues 874-883 (TPESSSNKVQ) show a composition bias toward polar residues. Positions 893–902 (EQQQLPSPSE) are enriched in low complexity. Positions 911 to 930 (LLKDRNLAREKEQERRRREA) are enriched in basic and acidic residues.

This sequence belongs to the BET family. As to quaternary structure, interacts with the acetylated N-terminus of histone H1, H2, H3 and H4. Interacts with P-TEFb components CDK9 and CCNT1/cyclin-T1. Interacts with mRNA splicing machinery proteins SRSF2, DDX5, HNRNPK and TARDBP. Interacts with SMARCE1. Ubiquitinated in a SPOP-dependent manner, leading to proteasomal degradation.

The protein localises to the nucleus. Testis-specific chromatin protein that specifically binds histone H4 acetylated at 'Lys-5' and 'Lys-8' (H4K5ac and H4K8ac, respectively) and plays a key role in spermatogenesis. Required in late pachytene spermatocytes: plays a role in meiotic and post-meiotic cells by binding to acetylated histones at the promoter of specific meiotic and post-meiotic genes, facilitating their activation at the appropriate time. In the post-meiotic phase of spermatogenesis, binds to hyperacetylated histones and participates in their general removal from DNA. Also recognizes and binds a subset of butyrylated histones: able to bind histone H4 butyrylated at 'Lys-8' (H4K8ac), while it is not able to bind H4 butyrylated at 'Lys-5' (H4K5ac). Also acts as a component of the splicing machinery in pachytene spermatocytes and round spermatids and participates in 3'-UTR truncation of specific mRNAs in post-meiotic spermatids. Required for chromocenter organization, a structure comprised of peri-centromeric heterochromatin. The chain is Bromodomain testis-specific protein (Brdt) from Rattus norvegicus (Rat).